A 270-amino-acid polypeptide reads, in one-letter code: ATP synthase subunit a 1 (270 aa).

A run of 5 helical transmembrane segments spans residues 38–58 (VHID…GIFY), 98–118 (IAPL…MDLV), 143–163 (DVNI…YYSI), 208–228 (LFGN…MLPW), and 239–259 (AIFH…LTIV).

This sequence belongs to the ATPase A chain family. F-type ATPases have 2 components, CF(1) - the catalytic core - and CF(0) - the membrane proton channel. CF(1) has five subunits: alpha(3), beta(3), gamma(1), delta(1), epsilon(1). CF(0) has three main subunits: a(1), b(2) and c(9-12). The alpha and beta chains form an alternating ring which encloses part of the gamma chain. CF(1) is attached to CF(0) by a central stalk formed by the gamma and epsilon chains, while a peripheral stalk is formed by the delta and b chains.

Its subcellular location is the cell inner membrane. Key component of the proton channel; it plays a direct role in the translocation of protons across the membrane. In Vibrio campbellii (strain ATCC BAA-1116), this protein is ATP synthase subunit a 1.